The following is a 175-amino-acid chain: Cytochrome c homolog (175 aa).

At 1–8 (MSGKELNK) the chain is on the cytoplasmic side. A helical; Signal-anchor membrane pass occupies residues 9–29 (IVAAILFASLIAMMVGFVANI). At 30 to 175 (LYKPTLELQH…LFLKTYVHDK (146 aa)) the chain is on the periplasmic side. 4 residues coordinate heme c: C84, C87, H88, and M150.

Belongs to the cytochrome c family. Post-translationally, binds 1 heme c group covalently per subunit.

The protein localises to the cell membrane. Its function is as follows. May be involved in electron transfer from bc1 complex to aa3. This is Cytochrome c homolog (cycM) from Rickettsia felis (strain ATCC VR-1525 / URRWXCal2) (Rickettsia azadi).